Reading from the N-terminus, the 203-residue chain is LexA repressor (203 aa).

The H-T-H motif DNA-binding region spans 30 to 50; that stretch reads VREICQAVSLKSTSTVHGHLK. Active-site for autocatalytic cleavage activity residues include S127 and K164.

This sequence belongs to the peptidase S24 family. As to quaternary structure, homodimer.

It catalyses the reaction Hydrolysis of Ala-|-Gly bond in repressor LexA.. Represses a number of genes involved in the response to DNA damage (SOS response), including recA and lexA. In the presence of single-stranded DNA, RecA interacts with LexA causing an autocatalytic cleavage which disrupts the DNA-binding part of LexA, leading to derepression of the SOS regulon and eventually DNA repair. The sequence is that of LexA repressor from Clostridium perfringens (strain ATCC 13124 / DSM 756 / JCM 1290 / NCIMB 6125 / NCTC 8237 / Type A).